The sequence spans 306 residues: IN2-2 protein (306 aa).

Y64 (proton donor) is an active-site residue. Position 131 (H131) interacts with substrate. 210 to 220 contacts NADP(+); it reads SPLGRGFFSSG. Residues 272–306 are disordered; sequence LGSPPRKRRLPHTWHNKNRQLQPERGGTVCEAYTG. Residues 276–289 are compositionally biased toward basic residues; the sequence is PRKRRLPHTWHNKN.

It belongs to the aldo/keto reductase family. Aldo/keto reductase 2 subfamily. As to expression, leaves and roots.

This is IN2-2 protein (IN2-2) from Zea mays (Maize).